A 456-amino-acid polypeptide reads, in one-letter code: Bifunctional protein GlmU (456 aa).

The segment at 1 to 229 (MLNNAMSVVI…LSEVEGVNNR (229 aa)) is pyrophosphorylase. UDP-N-acetyl-alpha-D-glucosamine contacts are provided by residues 11–14 (LAAG), lysine 25, glutamine 76, 81–82 (GT), 103–105 (YGD), glycine 140, glutamate 154, asparagine 169, and asparagine 227. Residue aspartate 105 coordinates Mg(2+). Residue asparagine 227 coordinates Mg(2+). The interval 230–250 (LQLSRLERVYQSEQAEKLLLA) is linker. The interval 251-456 (GVMLRDPARF…EGWRRPVKKK (206 aa)) is N-acetyltransferase. UDP-N-acetyl-alpha-D-glucosamine contacts are provided by arginine 333 and lysine 351. The Proton acceptor role is filled by histidine 363. Residues tyrosine 366 and asparagine 377 each contribute to the UDP-N-acetyl-alpha-D-glucosamine site. Acetyl-CoA is bound by residues alanine 380, 386-387 (NY), serine 405, alanine 423, and arginine 440.

The protein in the N-terminal section; belongs to the N-acetylglucosamine-1-phosphate uridyltransferase family. In the C-terminal section; belongs to the transferase hexapeptide repeat family. In terms of assembly, homotrimer. Mg(2+) is required as a cofactor.

Its subcellular location is the cytoplasm. The catalysed reaction is alpha-D-glucosamine 1-phosphate + acetyl-CoA = N-acetyl-alpha-D-glucosamine 1-phosphate + CoA + H(+). The enzyme catalyses N-acetyl-alpha-D-glucosamine 1-phosphate + UTP + H(+) = UDP-N-acetyl-alpha-D-glucosamine + diphosphate. It participates in nucleotide-sugar biosynthesis; UDP-N-acetyl-alpha-D-glucosamine biosynthesis; N-acetyl-alpha-D-glucosamine 1-phosphate from alpha-D-glucosamine 6-phosphate (route II): step 2/2. It functions in the pathway nucleotide-sugar biosynthesis; UDP-N-acetyl-alpha-D-glucosamine biosynthesis; UDP-N-acetyl-alpha-D-glucosamine from N-acetyl-alpha-D-glucosamine 1-phosphate: step 1/1. Its pathway is bacterial outer membrane biogenesis; LPS lipid A biosynthesis. Functionally, catalyzes the last two sequential reactions in the de novo biosynthetic pathway for UDP-N-acetylglucosamine (UDP-GlcNAc). The C-terminal domain catalyzes the transfer of acetyl group from acetyl coenzyme A to glucosamine-1-phosphate (GlcN-1-P) to produce N-acetylglucosamine-1-phosphate (GlcNAc-1-P), which is converted into UDP-GlcNAc by the transfer of uridine 5-monophosphate (from uridine 5-triphosphate), a reaction catalyzed by the N-terminal domain. The sequence is that of Bifunctional protein GlmU from Shigella flexneri serotype 5b (strain 8401).